A 431-amino-acid polypeptide reads, in one-letter code: Cytochrome c oxidase subunit 3 (431 aa).

Transmembrane regions (helical) follow at residues isoleucine 70 to isoleucine 90, phenylalanine 96 to phenylalanine 116, leucine 132 to tryptophan 152, valine 176 to isoleucine 196, leucine 321 to phenylalanine 341, phenylalanine 356 to isoleucine 376, and leucine 408 to tryptophan 428.

It belongs to the cytochrome c oxidase subunit 3 family. In terms of assembly, component of the cytochrome c oxidase (complex IV, CIV), a multisubunit enzyme composed of a catalytic core of 3 subunits and several supernumerary subunits. The complex exists as a monomer or a dimer and forms supercomplexes (SCs) in the inner mitochondrial membrane with ubiquinol-cytochrome c oxidoreductase (cytochrome b-c1 complex, complex III, CIII).

It is found in the mitochondrion inner membrane. The enzyme catalyses 4 Fe(II)-[cytochrome c] + O2 + 8 H(+)(in) = 4 Fe(III)-[cytochrome c] + 2 H2O + 4 H(+)(out). Component of the cytochrome c oxidase, the last enzyme in the mitochondrial electron transport chain which drives oxidative phosphorylation. The respiratory chain contains 3 multisubunit complexes succinate dehydrogenase (complex II, CII), ubiquinol-cytochrome c oxidoreductase (cytochrome b-c1 complex, complex III, CIII) and cytochrome c oxidase (complex IV, CIV), that cooperate to transfer electrons derived from NADH and succinate to molecular oxygen, creating an electrochemical gradient over the inner membrane that drives transmembrane transport and the ATP synthase. Cytochrome c oxidase is the component of the respiratory chain that catalyzes the reduction of oxygen to water. Electrons originating from reduced cytochrome c in the intermembrane space (IMS) are transferred via the dinuclear copper A center (CU(A)) of subunit 2 and heme A of subunit 1 to the active site in subunit 1, a binuclear center (BNC) formed by heme A3 and copper B (CU(B)). The BNC reduces molecular oxygen to 2 water molecules using 4 electrons from cytochrome c in the IMS and 4 protons from the mitochondrial matrix. The chain is Cytochrome c oxidase subunit 3 (cox3) from Dictyostelium citrinum (Slime mold).